Reading from the N-terminus, the 467-residue chain is 26S proteasome regulatory subunit 7 homolog (467 aa).

2 disordered regions span residues 1-26 and 108-140; these read MPPK…DDKI and GNGE…DEDD. Positions 117 to 134 are enriched in low complexity; that stretch reads TDNNNSGNSNSNSNQQST. Phosphoserine occurs at positions 164 and 231. 250 to 257 is an ATP binding site; sequence GPPGTGKT.

It belongs to the AAA ATPase family. As to quaternary structure, interacts with UBR1 and CIC1. In terms of processing, the N-terminus is blocked.

The protein localises to the cytoplasm. It is found in the nucleus. The 26S proteasome is involved in the ATP-dependent degradation of ubiquitinated proteins. The regulatory (or ATPase) complex confers ATP dependency and substrate specificity to the 26S complex. This chain is 26S proteasome regulatory subunit 7 homolog (RPT1), found in Saccharomyces cerevisiae (strain ATCC 204508 / S288c) (Baker's yeast).